The primary structure comprises 430 residues: Lipoyl synthase, mitochondrial (430 aa).

Residues 1–37 (MATSAGKLRTLYSAHSSLSSLPPSARPTLQLATLRSY) constitute a mitochondrion transit peptide. Residues 39 to 55 (TTTPHDSPIGNTSNTPP) are compositionally biased toward polar residues. A disordered region spans residues 39–58 (TTTPHDSPIGNTSNTPPTVK). Positions 141, 146, 152, 172, 176, 179, and 387 each coordinate [4Fe-4S] cluster. Positions 155-376 (GSSKSAATAT…KERALEMGFL (222 aa)) constitute a Radical SAM core domain.

Belongs to the radical SAM superfamily. Lipoyl synthase family. [4Fe-4S] cluster is required as a cofactor.

Its subcellular location is the mitochondrion. The catalysed reaction is [[Fe-S] cluster scaffold protein carrying a second [4Fe-4S](2+) cluster] + N(6)-octanoyl-L-lysyl-[protein] + 2 oxidized [2Fe-2S]-[ferredoxin] + 2 S-adenosyl-L-methionine + 4 H(+) = [[Fe-S] cluster scaffold protein] + N(6)-[(R)-dihydrolipoyl]-L-lysyl-[protein] + 4 Fe(3+) + 2 hydrogen sulfide + 2 5'-deoxyadenosine + 2 L-methionine + 2 reduced [2Fe-2S]-[ferredoxin]. It functions in the pathway protein modification; protein lipoylation via endogenous pathway; protein N(6)-(lipoyl)lysine from octanoyl-[acyl-carrier-protein]: step 2/2. Functionally, catalyzes the radical-mediated insertion of two sulfur atoms into the C-6 and C-8 positions of the octanoyl moiety bound to the lipoyl domains of lipoate-dependent enzymes, thereby converting the octanoylated domains into lipoylated derivatives. In Ajellomyces capsulatus (strain G186AR / H82 / ATCC MYA-2454 / RMSCC 2432) (Darling's disease fungus), this protein is Lipoyl synthase, mitochondrial.